A 429-amino-acid polypeptide reads, in one-letter code: Probable imidazolonepropionase (429 aa).

The 4-imidazolone-5-propanoate site is built by tyrosine 161 and histidine 194. Tyrosine 161 lines the N-formimidoyl-L-glutamate pocket. A Fe(3+)-binding site is contributed by histidine 262. Histidine 262 provides a ligand contact to Zn(2+). Residue glutamate 265 coordinates 4-imidazolone-5-propanoate. Aspartate 336 is a binding site for Fe(3+). Zn(2+) is bound at residue aspartate 336. Residue asparagine 338 coordinates N-formimidoyl-L-glutamate.

The protein belongs to the metallo-dependent hydrolases superfamily. HutI family. It depends on Zn(2+) as a cofactor. The cofactor is Fe(3+).

It carries out the reaction 4-imidazolone-5-propanoate + H2O = N-formimidoyl-L-glutamate. It participates in amino-acid degradation; L-histidine degradation into L-glutamate; N-formimidoyl-L-glutamate from L-histidine: step 3/3. This Nematostella vectensis (Starlet sea anemone) protein is Probable imidazolonepropionase (amdhd1).